Here is a 258-residue protein sequence, read N- to C-terminus: Cytochrome c oxidase subunit 2 (258 aa).

Residues 1–41 (MIVNECLFFTIALCDAAEPWQLGFQDAATPMMQGIIDLHHD) are Mitochondrial intermembrane-facing. The chain crosses the membrane as a helical span at residues 42–58 (ILFFLILILVFVLWILV). Topologically, residues 59–82 (RALWHFYYKKNPIPQRIVHGTTIE) are mitochondrial matrix. The helical transmembrane segment at 83-104 (ILWTIFPSIILMFIAIPSFALL) threads the bilayer. Residues 105-258 (YSMDEVVVDP…VSNLFIPPTS (154 aa)) are Mitochondrial intermembrane-facing. Cu cation contacts are provided by His187, Cys222, Glu224, Cys226, His230, and Met233. Glu224 lines the Mg(2+) pocket.

The protein belongs to the cytochrome c oxidase subunit 2 family. As to quaternary structure, component of the cytochrome c oxidase (complex IV, CIV), a multisubunit enzyme composed of a catalytic core of 3 subunits and several supernumerary subunits. The complex exists as a monomer or a dimer and forms supercomplexes (SCs) in the inner mitochondrial membrane with ubiquinol-cytochrome c oxidoreductase (cytochrome b-c1 complex, complex III, CIII). It depends on Cu cation as a cofactor.

It localises to the mitochondrion inner membrane. The catalysed reaction is 4 Fe(II)-[cytochrome c] + O2 + 8 H(+)(in) = 4 Fe(III)-[cytochrome c] + 2 H2O + 4 H(+)(out). Component of the cytochrome c oxidase, the last enzyme in the mitochondrial electron transport chain which drives oxidative phosphorylation. The respiratory chain contains 3 multisubunit complexes succinate dehydrogenase (complex II, CII), ubiquinol-cytochrome c oxidoreductase (cytochrome b-c1 complex, complex III, CIII) and cytochrome c oxidase (complex IV, CIV), that cooperate to transfer electrons derived from NADH and succinate to molecular oxygen, creating an electrochemical gradient over the inner membrane that drives transmembrane transport and the ATP synthase. Cytochrome c oxidase is the component of the respiratory chain that catalyzes the reduction of oxygen to water. Electrons originating from reduced cytochrome c in the intermembrane space (IMS) are transferred via the dinuclear copper A center (CU(A)) of subunit 2 and heme A of subunit 1 to the active site in subunit 1, a binuclear center (BNC) formed by heme A3 and copper B (CU(B)). The BNC reduces molecular oxygen to 2 water molecules using 4 electrons from cytochrome c in the IMS and 4 protons from the mitochondrial matrix. The polypeptide is Cytochrome c oxidase subunit 2 (COX2) (Oenothera berteroana (Bertero's evening primrose)).